Here is a 145-residue protein sequence, read N- to C-terminus: Small ribosomal subunit protein uS12 (145 aa).

This sequence belongs to the universal ribosomal protein uS12 family. In terms of assembly, component of the small ribosomal subunit. Mature ribosomes consist of a small (40S) and a large (60S) subunit. The 40S subunit contains about 32 different proteins and 1 molecule of RNA (18S). The 60S subunit contains 45 different proteins and 3 molecules of RNA (25S, 5.8S and 5S).

Its subcellular location is the cytoplasm. Its function is as follows. Component of the ribosome, a large ribonucleoprotein complex responsible for the synthesis of proteins in the cell. The small ribosomal subunit (SSU) binds messenger RNAs (mRNAs) and translates the encoded message by selecting cognate aminoacyl-transfer RNA (tRNA) molecules. The large subunit (LSU) contains the ribosomal catalytic site termed the peptidyl transferase center (PTC), which catalyzes the formation of peptide bonds, thereby polymerizing the amino acids delivered by tRNAs into a polypeptide chain. The nascent polypeptides leave the ribosome through a tunnel in the LSU and interact with protein factors that function in enzymatic processing, targeting, and the membrane insertion of nascent chains at the exit of the ribosomal tunnel. In Candida albicans (strain SC5314 / ATCC MYA-2876) (Yeast), this protein is Small ribosomal subunit protein uS12 (RPS23A).